Consider the following 139-residue polypeptide: UPF0225 protein Bpro_4182 (139 aa).

This sequence belongs to the UPF0225 family.

In Polaromonas sp. (strain JS666 / ATCC BAA-500), this protein is UPF0225 protein Bpro_4182.